The following is a 204-amino-acid chain: Tetraspanin-13 (204 aa).

Topologically, residues 1–19 (MVCGGFACSKNCLCALNLL) are cytoplasmic. Residues 20 to 40 (YTLVSLLLIGIAAWGIGFGLI) form a helical membrane-spanning segment. Residues 41-44 (SSLR) lie on the Extracellular side of the membrane. A helical transmembrane segment spans residues 45–65 (VVGVVIAVGIFLFLIALVGLI). Residues 66 to 72 (GAVKHHQ) lie on the Cytoplasmic side of the membrane. A helical transmembrane segment spans residues 73–93 (VLLFFYMIILLLVFIVQFSVS). Topologically, residues 94 to 167 (CACLALNQEQ…IGRYAGEVLR (74 aa)) are extracellular. Asn113 and Asn137 each carry an N-linked (GlcNAc...) asparagine glycan. At Ser143 the chain carries Phosphoserine. A helical membrane pass occupies residues 168–188 (FVGGIGLFFSFTEILGVWLTY). At 189 to 204 (RYRNQKDPRANPSAFL) the chain is on the cytoplasmic side.

Belongs to the tetraspanin (TM4SF) family.

The protein localises to the membrane. The sequence is that of Tetraspanin-13 (TSPAN13) from Bos taurus (Bovine).